The following is a 173-amino-acid chain: Inorganic pyrophosphatase (173 aa).

Substrate is bound by residues Lys28, Arg42, and Tyr54. Residues Asp64, Asp69, and Asp101 each coordinate Mg(2+). Tyr140 contributes to the substrate binding site.

It belongs to the PPase family. Homohexamer. It depends on Mg(2+) as a cofactor.

The protein resides in the cytoplasm. It catalyses the reaction diphosphate + H2O = 2 phosphate + H(+). In terms of biological role, catalyzes the hydrolysis of inorganic pyrophosphate (PPi) forming two phosphate ions. The polypeptide is Inorganic pyrophosphatase (Helicobacter pylori (strain ATCC 700392 / 26695) (Campylobacter pylori)).